We begin with the raw amino-acid sequence, 189 residues long: GMP synthase [glutamine-hydrolyzing] subunit A (189 aa).

A Glutamine amidotransferase type-1 domain is found at 1 to 189 (MIVILNNGGQ…CKKCGFEFEE (189 aa)). Cys76 functions as the Nucleophile in the catalytic mechanism. Residues His163 and Glu165 contribute to the active site.

Heterodimer composed of a glutamine amidotransferase subunit (A) and a GMP-binding subunit (B).

The catalysed reaction is XMP + L-glutamine + ATP + H2O = GMP + L-glutamate + AMP + diphosphate + 2 H(+). The protein operates within purine metabolism; GMP biosynthesis; GMP from XMP (L-Gln route): step 1/1. Catalyzes the synthesis of GMP from XMP. The sequence is that of GMP synthase [glutamine-hydrolyzing] subunit A from Methanococcus maripaludis (strain C6 / ATCC BAA-1332).